A 166-amino-acid chain; its full sequence is Interferon gamma (166 aa).

The first 23 residues, 1–23 (MNYTSYILAFQLCVILCSSGCNC), serve as a signal peptide directing secretion. Gln24 is modified (pyrrolidone carboxylic acid). 2 N-linked (GlcNAc...) asparagine glycosylation sites follow: Asn39 and Asn106.

Belongs to the type II (or gamma) interferon family. Homodimer. Interacts with IFNGR1 (via extracellular domain); this interaction promotes IFNGR1 dimerization. In terms of tissue distribution, released primarily from activated T lymphocytes.

It localises to the secreted. In terms of biological role, type II interferon produced by immune cells such as T-cells and NK cells that plays crucial roles in antimicrobial, antiviral, and antitumor responses by activating effector immune cells and enhancing antigen presentation. Primarily signals through the JAK-STAT pathway after interaction with its receptor IFNGR1 to affect gene regulation. Upon IFNG binding, IFNGR1 intracellular domain opens out to allow association of downstream signaling components JAK2, JAK1 and STAT1, leading to STAT1 activation, nuclear translocation and transcription of IFNG-regulated genes. Many of the induced genes are transcription factors such as IRF1 that are able to further drive regulation of a next wave of transcription. Plays a role in class I antigen presentation pathway by inducing a replacement of catalytic proteasome subunits with immunoproteasome subunits. In turn, increases the quantity, quality, and repertoire of peptides for class I MHC loading. Increases the efficiency of peptide generation also by inducing the expression of activator PA28 that associates with the proteasome and alters its proteolytic cleavage preference. Up-regulates as well MHC II complexes on the cell surface by promoting expression of several key molecules such as cathepsins B/CTSB, H/CTSH, and L/CTSL. Participates in the regulation of hematopoietic stem cells during development and under homeostatic conditions by affecting their development, quiescence, and differentiation. The polypeptide is Interferon gamma (IFNG) (Canis lupus familiaris (Dog)).